Reading from the N-terminus, the 332-residue chain is Melanocortin receptor 4 (332 aa).

Over 1–43 the chain is Extracellular; the sequence is MNSTHHHGMYTSLHLWNRSSYGLHGNASESLGKGHPDGGCYEQ. N-linked (GlcNAc...) asparagine glycans are attached at residues N2, N17, and N26. 2 disulfide bridges follow: C40–C279 and C271–C277. The helical transmembrane segment at 44–69 threads the bilayer; sequence LFVSPEVFVTLGVISLLENILVIVAI. The Cytoplasmic segment spans residues 70-81; it reads AKNKNLHSPMYF. Residues 82-106 traverse the membrane as a helical segment; sequence FICSLAVADMLVSVSNGSETIVITL. Ca(2+) is bound at residue E100. The Extracellular portion of the chain corresponds to 107–123; the sequence is LNSTDTDAQSFTVNIDN. An N-linked (GlcNAc...) asparagine glycan is attached at N108. Ca(2+) contacts are provided by D122 and D126. A helical transmembrane segment spans residues 124–145; sequence VIDSVICSSLLASICSLLSIAV. The Cytoplasmic portion of the chain corresponds to 146 to 165; it reads DRYFTIFYALQYHNIMTVRR. The helical transmembrane segment at 166–186 threads the bilayer; sequence VGIIISCIWAACTVSGVLFII. Residues 187-191 lie on the Extracellular side of the membrane; that stretch reads YSDSS. The helical transmembrane segment at 192–215 threads the bilayer; the sequence is AVIICLISMFFTMLVLMASLYVHM. Residues 216-248 lie on the Cytoplasmic side of the membrane; the sequence is FLMARLHIKRIAVLPGTGTIRQGTNMKGAITLT. Residues 249–271 traverse the membrane as a helical segment; that stretch reads ILIGVFVVCWAPFFLHLLFYISC. At 272–280 the chain is on the extracellular side; sequence PQNPYCVCF. A helical membrane pass occupies residues 281 to 304; sequence MSHFNLYLILIMCNAVIDPLIYAL. At 305–332 the chain is on the cytoplasmic side; sequence RSQELRKTFKEIICFYPLGGICELSSRY. C318 carries S-palmitoyl cysteine lipidation.

The protein belongs to the G-protein coupled receptor 1 family. In terms of assembly, homodimer; disulfide-linked, also forms higher order oligomers. Interacts with GNAS. Interacts with ATRNL1. Interacts with MGRN1; this interaction competes with GNAS-binding and thus inhibits agonist-induced cAMP production. Interacts with MRAP and MRAP2; these associated factors increase ligand-sensitivity and generation of cAMP.

It localises to the cell membrane. Functionally, hormone receptor that acts as a key component of the leptin-melanocortin pathway at the intersection of homeostatic maintenance of energetic state. Plays a role in regulating food intake: activation by a stimulating hormone such as anorexigenic alpha-melanocyte stimulating hormone (alpha-MSH) inhibits appetite, whereas binding to a natural antagonist like Agouti-related protein/AGRP promotes appetite. G-protein-coupled receptor that activates conventional Galphas signaling leading to induction of anorexogenic signaling in the hypothalamus to result in negative energy balance. Regulates the firing activity of neurons from the hypothalamus by alpha-MSH and AGRP independently of Galphas signaling by ligand-induced coupling of closure of inwardly rectifying potassium channel KCNJ13. In intestinal epithelial cells, plays a role in the inhibition of hepatic glucose production via nesfatin-1/NUCB2 leading to increased cyclic adenosine monophosphate (cAMP) levels and glucagon-like peptide 1 (GLP-1) secretion in the intestinal epithelium. The chain is Melanocortin receptor 4 (Mc4r) from Mus musculus (Mouse).